A 252-amino-acid chain; its full sequence is Hsp70-Hsp90 organising protein (252 aa).

TPR repeat units follow at residues 7–40 (AQRL…DPLD), 41–74 (HVLY…KKDW), and 75–108 (PKGY…DPNN). Residues 197–239 (EGNDAEERQRQQREEEERRKKKEEEERKKKEEEEMKKQNRTPE) are a coiled coil. Residues 199–252 (NDAEERQRQQREEEERRKKKEEEERKKKEEEEMKKQNRTPEQIQGDEHKLKVMN) form a disordered region. Basic and acidic residues-rich tracts occupy residues 201 to 233 (AEER…EMKK) and 243 to 252 (GDEHKLKVMN).

In terms of assembly, monomer. Homodimer. Forms a complex composed of HOP and chaperones HSP70 and HSP90; the interaction is stronger in the absence of ATP. Interacts (via TPR 1, 2, 3, 7, 8 and 9 repeats) with HSP70 (via C-terminus); the interaction is direct and is stronger in the absence of ATP. Interacts (via TPR 4, 5 and 6 repeats) with HSP90 (via C-terminus); the interaction is direct.

The protein resides in the cytoplasm. Acts as a co-chaperone and mediates the association of the chaperones HSP70 and HSP90 probably facilitating substrate transfer from HSP70 to HSP90. Stimulates HSP70 ATPase activity and, in contrast, inhibits HSP90 ATPase activity. In Plasmodium falciparum, this protein is Hsp70-Hsp90 organising protein.